Here is a 406-residue protein sequence, read N- to C-terminus: Argininosuccinate synthase (406 aa).

ATP-binding positions include 11–19 and Ala38; that span reads AYSGGLDTS. Positions 91 and 96 each coordinate L-citrulline. Residue Gly121 coordinates ATP. L-aspartate contacts are provided by Thr123, Asn127, and Asp128. Residue Asn127 participates in L-citrulline binding. L-citrulline contacts are provided by Arg131, Ser181, Ser190, Glu266, and Tyr278.

It belongs to the argininosuccinate synthase family. Type 1 subfamily. As to quaternary structure, homotetramer.

It is found in the cytoplasm. It carries out the reaction L-citrulline + L-aspartate + ATP = 2-(N(omega)-L-arginino)succinate + AMP + diphosphate + H(+). It functions in the pathway amino-acid biosynthesis; L-arginine biosynthesis; L-arginine from L-ornithine and carbamoyl phosphate: step 2/3. The polypeptide is Argininosuccinate synthase (Campylobacter jejuni subsp. doylei (strain ATCC BAA-1458 / RM4099 / 269.97)).